The primary structure comprises 126 residues: Glycine cleavage system H protein (126 aa).

In terms of domain architecture, Lipoyl-binding spans 23 to 104; sequence TLTVGITDHA…PYESWLFKIK (82 aa). Lys64 bears the N6-lipoyllysine mark.

Belongs to the GcvH family. As to quaternary structure, the glycine cleavage system is composed of four proteins: P, T, L and H. It depends on (R)-lipoate as a cofactor.

In terms of biological role, the glycine cleavage system catalyzes the degradation of glycine. The H protein shuttles the methylamine group of glycine from the P protein to the T protein. This Paraburkholderia phytofirmans (strain DSM 17436 / LMG 22146 / PsJN) (Burkholderia phytofirmans) protein is Glycine cleavage system H protein.